We begin with the raw amino-acid sequence, 187 residues long: UPF0398 protein LBA1157 (187 aa).

Belongs to the UPF0398 family.

The chain is UPF0398 protein LBA1157 from Lactobacillus acidophilus (strain ATCC 700396 / NCK56 / N2 / NCFM).